The following is a 75-amino-acid chain: ATP synthase subunit c (75 aa).

2 helical membrane-spanning segments follow: residues 12-32 (LASIGYGLAAIGSAIGVGIVV) and 49-69 (LTVLMYVGVAFTEALALIGIG).

Belongs to the ATPase C chain family. F-type ATPases have 2 components, F(1) - the catalytic core - and F(0) - the membrane proton channel. F(1) has five subunits: alpha(3), beta(3), gamma(1), delta(1), epsilon(1). F(0) has three main subunits: a(1), b(2) and c(10-14). The alpha and beta chains form an alternating ring which encloses part of the gamma chain. F(1) is attached to F(0) by a central stalk formed by the gamma and epsilon chains, while a peripheral stalk is formed by the delta and b chains.

The protein resides in the cell membrane. Its function is as follows. F(1)F(0) ATP synthase produces ATP from ADP in the presence of a proton or sodium gradient. F-type ATPases consist of two structural domains, F(1) containing the extramembraneous catalytic core and F(0) containing the membrane proton channel, linked together by a central stalk and a peripheral stalk. During catalysis, ATP synthesis in the catalytic domain of F(1) is coupled via a rotary mechanism of the central stalk subunits to proton translocation. Functionally, key component of the F(0) channel; it plays a direct role in translocation across the membrane. A homomeric c-ring of between 10-14 subunits forms the central stalk rotor element with the F(1) delta and epsilon subunits. This chain is ATP synthase subunit c, found in Tropheryma whipplei (strain TW08/27) (Whipple's bacillus).